The chain runs to 735 residues: 5-methyltetrahydropteroyltriglutamate--homocysteine methyltransferase (735 aa).

5-methyltetrahydropteroyltri-L-glutamate-binding positions include 15–18 (REFK) and K104. L-homocysteine is bound by residues 409–411 (IGS) and E462. L-methionine-binding positions include 409–411 (IGS) and E462. Residues 493-494 (RC) and W539 each bind 5-methyltetrahydropteroyltri-L-glutamate. D577 serves as a coordination point for L-homocysteine. L-methionine is bound at residue D577. Residue E583 participates in 5-methyltetrahydropteroyltri-L-glutamate binding. The Zn(2+) site is built by H618, C620, and E642. H672 (proton donor) is an active-site residue. C704 contacts Zn(2+).

This sequence belongs to the vitamin-B12 independent methionine synthase family. Requires Zn(2+) as cofactor.

It catalyses the reaction 5-methyltetrahydropteroyltri-L-glutamate + L-homocysteine = tetrahydropteroyltri-L-glutamate + L-methionine. The protein operates within amino-acid biosynthesis; L-methionine biosynthesis via de novo pathway; L-methionine from L-homocysteine (MetE route): step 1/1. Catalyzes the transfer of a methyl group from 5-methyltetrahydrofolate to homocysteine resulting in methionine formation. In Thermotoga petrophila (strain ATCC BAA-488 / DSM 13995 / JCM 10881 / RKU-1), this protein is 5-methyltetrahydropteroyltriglutamate--homocysteine methyltransferase.